We begin with the raw amino-acid sequence, 676 residues long: DNA ligase (676 aa).

NAD(+) contacts are provided by residues 35–39 (DAEYD), 84–85 (SL), and glutamate 118. Catalysis depends on lysine 120, which acts as the N6-AMP-lysine intermediate. Residues arginine 141, glutamate 176, lysine 284, and lysine 308 each coordinate NAD(+). Cysteine 402, cysteine 405, cysteine 420, and cysteine 426 together coordinate Zn(2+). A BRCT domain is found at 595 to 676 (SYLSLIHGKI…WLQYTQSSEN (82 aa)).

It belongs to the NAD-dependent DNA ligase family. LigA subfamily. It depends on Mg(2+) as a cofactor. Mn(2+) is required as a cofactor.

It carries out the reaction NAD(+) + (deoxyribonucleotide)n-3'-hydroxyl + 5'-phospho-(deoxyribonucleotide)m = (deoxyribonucleotide)n+m + AMP + beta-nicotinamide D-nucleotide.. Functionally, DNA ligase that catalyzes the formation of phosphodiester linkages between 5'-phosphoryl and 3'-hydroxyl groups in double-stranded DNA using NAD as a coenzyme and as the energy source for the reaction. It is essential for DNA replication and repair of damaged DNA. The sequence is that of DNA ligase from Ehrlichia chaffeensis (strain ATCC CRL-10679 / Arkansas).